The chain runs to 317 residues: Olfactory receptor 5AP2 (317 aa).

Residues 1-32 lie on the Extracellular side of the membrane; it reads MVRSGKGIQNKNATEVTEFILLGLSDNPDLQG. An N-linked (GlcNAc...) asparagine glycan is attached at Asn12. A helical transmembrane segment spans residues 33–53; sequence VLFALFLIIYTMTLVGNLGMM. Residues 54 to 61 are Cytoplasmic-facing; that stretch reads ALIKIDRS. The chain crosses the membrane as a helical span at residues 62–82; it reads LHTPMYFFLSSLSFVDASYSS. Residues 83 to 106 are Extracellular-facing; that stretch reads SVTPKMLVNLMAEDKSISFNGCAT. A disulfide bridge connects residues Cys104 and Cys196. A helical transmembrane segment spans residues 107-127; that stretch reads QFFFFGSFLGTECFLLAMMAY. Residues 128–140 are Cytoplasmic-facing; that stretch reads DRYAAIWNPLLYP. Residues 141–161 form a helical membrane-spanning segment; it reads VLMSGRICFMLVSTSFLAGFG. Over 162–203 the chain is Extracellular; it reads NAAIHTGMTFRLSFCGSNKINHFYCDTPPLLKLSCSDTHING. Residues 204–224 form a helical membrane-spanning segment; the sequence is IVIMAFSSFNVISCVLIVLIS. Residues 225-244 lie on the Cytoplasmic side of the membrane; the sequence is YLCILIAILKMPSAEGRHKA. A helical membrane pass occupies residues 245 to 265; it reads FSTCASHLMAVTIFFGTILFM. The Extracellular portion of the chain corresponds to 266–278; the sequence is YLRPTSSYSMEQD. The helical transmembrane segment at 279–299 threads the bilayer; sequence KVVSVFYTVVIPMLNPLIYSL. At 300–317 the chain is on the cytoplasmic side; that stretch reads KNKDVKKAVKKILHNYVV.

The protein belongs to the G-protein coupled receptor 1 family.

The protein localises to the cell membrane. In terms of biological role, odorant receptor. The polypeptide is Olfactory receptor 5AP2 (Mus musculus (Mouse)).